Consider the following 154-residue polypeptide: 3-dehydroquinate dehydratase (154 aa).

Tyr-23 (proton acceptor) is an active-site residue. The substrate site is built by Asn-74, His-80, and Asp-87. His-100 (proton donor) is an active-site residue. Residues 101–102 and Arg-111 contribute to the substrate site; that span reads LS.

Belongs to the type-II 3-dehydroquinase family. As to quaternary structure, homododecamer.

The catalysed reaction is 3-dehydroquinate = 3-dehydroshikimate + H2O. It participates in metabolic intermediate biosynthesis; chorismate biosynthesis; chorismate from D-erythrose 4-phosphate and phosphoenolpyruvate: step 3/7. Functionally, catalyzes a trans-dehydration via an enolate intermediate. This is 3-dehydroquinate dehydratase from Actinobacillus pleuropneumoniae serotype 5b (strain L20).